A 538-amino-acid chain; its full sequence is Phosphoenolpyruvate carboxykinase (ATP) (538 aa).

Residues Arg61, Tyr195, and Lys201 each contribute to the substrate site. Residues Lys201, His220, and 236-244 (GLSGTGKTT) contribute to the ATP site. Positions 201 and 220 each coordinate Mn(2+). Asp257 contacts Mn(2+). ATP-binding residues include Glu285, Arg323, and Thr449. A substrate-binding site is contributed by Arg323.

This sequence belongs to the phosphoenolpyruvate carboxykinase (ATP) family. The cofactor is Mn(2+).

It is found in the cytoplasm. It carries out the reaction oxaloacetate + ATP = phosphoenolpyruvate + ADP + CO2. It functions in the pathway carbohydrate biosynthesis; gluconeogenesis. Involved in the gluconeogenesis. Catalyzes the conversion of oxaloacetate (OAA) to phosphoenolpyruvate (PEP) through direct phosphoryl transfer between the nucleoside triphosphate and OAA. This is Phosphoenolpyruvate carboxykinase (ATP) from Bradyrhizobium diazoefficiens (strain JCM 10833 / BCRC 13528 / IAM 13628 / NBRC 14792 / USDA 110).